The chain runs to 434 residues: Serine protease HTRA2, mitochondrial (434 aa).

Residues 34-65 (YSNNTANITTDSSSSSNNNSNRNNKNDNNNED) are disordered. Residues 35-60 (SNNTANITTDSSSSSNNNSNRNNKND) show a composition bias toward low complexity. Residues 74 to 92 (LVRFFVPFSLGAVASSLVM) form a helical membrane-spanning segment. An IAP-binding motif is present at residues 85-88 (AVAS). A serine protease region spans residues 151–314 (SNGSGFVIEQ…IPIDYVKVFL (164 aa)). Active-site charge relay system residues include His-169, Asp-201, and Ser-278. Positions 337–424 (MGITMLTLTP…NMIIMRGVKQ (88 aa)) constitute a PDZ domain.

The protein belongs to the peptidase S1C family. As to quaternary structure, interacts with th/DIAP1 (via BIR 2 domain).

Its subcellular location is the mitochondrion intermembrane space. The protein localises to the mitochondrion membrane. It catalyses the reaction Cleavage of non-polar aliphatic amino-acids at the P1 position, with a preference for Val, Ile and Met. At the P2 and P3 positions, Arg is selected most strongly with a secondary preference for other hydrophilic residues.. Its function is as follows. Serine protease that shows proteolytic activity against a non-specific substrate beta-casein. Promotes or induces cell death either by direct binding to and inhibition of BIRC proteins (also called inhibitor of apoptosis proteins, IAPs), leading to an increase in caspase activity, or by a BIRC inhibition-independent, caspase-independent and serine protease activity-dependent mechanism. Can antagonize antiapoptotic activity of th/Diap1 by directly inducing the degradation of th/Diap1. The chain is Serine protease HTRA2, mitochondrial from Drosophila willistoni (Fruit fly).